A 434-amino-acid polypeptide reads, in one-letter code: Hydrogenobyrinate a,c-diamide synthase (434 aa).

One can recognise a GATase cobBQ-type domain in the interval 243 to 434 (RIAVARDIAF…MHLIDVAGAA (192 aa)). The Nucleophile role is filled by Cys-326.

The protein belongs to the CobB/CbiA family. In terms of assembly, homodimer. The cofactor is Mg(2+).

The catalysed reaction is hydrogenobyrinate + 2 L-glutamine + 2 ATP + 2 H2O = hydrogenobyrinate a,c-diamide + 2 L-glutamate + 2 ADP + 2 phosphate + 2 H(+). Its pathway is cofactor biosynthesis; adenosylcobalamin biosynthesis; cob(II)yrinate a,c-diamide from precorrin-2 (aerobic route): step 9/10. Catalyzes the ATP-dependent amidation of the two carboxylate groups at positions a and c of hydrogenobyrinate, using either L-glutamine or ammonia as the nitrogen source. To a much lesser extent, can also use cobyrinate as substrate in vitro, but the physiological substrate is indeed hydrogenobyrinate, as part of the aerobic pathway for cobalamin biosynthesis. In Sinorhizobium sp, this protein is Hydrogenobyrinate a,c-diamide synthase.